The following is a 233-amino-acid chain: V-type proton ATPase subunit E (233 aa).

The protein belongs to the V-ATPase E subunit family. In terms of assembly, V-ATPase is a heteromultimeric enzyme composed of a peripheral catalytic V1 complex (components A to H) attached to an integral membrane V0 proton pore complex (components: a, c, c', c'' and d).

Subunit of the peripheral V1 complex of vacuolar ATPase essential for assembly or catalytic function. V-ATPase is responsible for acidifying a variety of intracellular compartments in eukaryotic cells. The chain is V-type proton ATPase subunit E (vatE) from Dictyostelium discoideum (Social amoeba).